We begin with the raw amino-acid sequence, 193 residues long: Zinc finger protein AZF3 (193 aa).

2 consecutive C2H2-type zinc fingers follow at residues 75–97 (YKCGVCYKTFSSYQALGGHKASH) and 118–140 (HVCSVCGKSFATGQALGGHKRCH).

Expressed in roots.

It localises to the nucleus. Its function is as follows. Transcriptional repressor probably involved in abiotic stress responses. Binds DNA in a sequence-specific manner and can repress the transactivation activity of other transcription factors. In Arabidopsis thaliana (Mouse-ear cress), this protein is Zinc finger protein AZF3 (AZF3).